A 284-amino-acid chain; its full sequence is Bifunctional protein FolD (284 aa).

NADP(+) is bound by residues 165 to 167 (GRS), serine 190, and isoleucine 231.

It belongs to the tetrahydrofolate dehydrogenase/cyclohydrolase family. As to quaternary structure, homodimer.

It catalyses the reaction (6R)-5,10-methylene-5,6,7,8-tetrahydrofolate + NADP(+) = (6R)-5,10-methenyltetrahydrofolate + NADPH. The enzyme catalyses (6R)-5,10-methenyltetrahydrofolate + H2O = (6R)-10-formyltetrahydrofolate + H(+). Its pathway is one-carbon metabolism; tetrahydrofolate interconversion. Its function is as follows. Catalyzes the oxidation of 5,10-methylenetetrahydrofolate to 5,10-methenyltetrahydrofolate and then the hydrolysis of 5,10-methenyltetrahydrofolate to 10-formyltetrahydrofolate. This is Bifunctional protein FolD from Lysinibacillus sphaericus (strain C3-41).